The chain runs to 251 residues: uncharacterized protein (251 aa).

A signal peptide spans 1-18 (MRILIILSIILCSLSIRA).

Belongs to the MlaA family.

This is an uncharacterized protein from Rickettsia conorii (strain ATCC VR-613 / Malish 7).